A 281-amino-acid polypeptide reads, in one-letter code: 3-hydroxyanthranilate 3,4-dioxygenase (281 aa).

The interval Met1–Gly162 is domain A (catalytic). Residue Arg45 coordinates O2. Fe cation-binding residues include His49, Glu55, and His93. Residue Glu55 coordinates substrate. Residues Arg97 and Glu107 each coordinate substrate. The linker stretch occupies residues Lys163–Leu179. A domain B region spans residues Pro180 to Ala281.

Belongs to the 3-HAO family. It depends on Fe(2+) as a cofactor.

Its subcellular location is the cytoplasm. The enzyme catalyses 3-hydroxyanthranilate + O2 = (2Z,4Z)-2-amino-3-carboxymuconate 6-semialdehyde. The protein operates within cofactor biosynthesis; NAD(+) biosynthesis; quinolinate from L-kynurenine: step 3/3. Functionally, catalyzes the oxidative ring opening of 3-hydroxyanthranilate to 2-amino-3-carboxymuconate semialdehyde, which spontaneously cyclizes to quinolinate. This chain is 3-hydroxyanthranilate 3,4-dioxygenase (haao-1), found in Caenorhabditis elegans.